The chain runs to 572 residues: Phosphoenolpyruvate-protein phosphotransferase (572 aa).

The active-site Tele-phosphohistidine intermediate is the His-191. Residues Arg-298 and Arg-334 each coordinate phosphoenolpyruvate. Mg(2+)-binding residues include Glu-433 and Asp-457. Residues 456-457 and Arg-467 each bind phosphoenolpyruvate; that span reads ND. The active-site Proton donor is Cys-504.

It belongs to the PEP-utilizing enzyme family. As to quaternary structure, homodimer. The cofactor is Mg(2+).

It localises to the cytoplasm. It carries out the reaction L-histidyl-[protein] + phosphoenolpyruvate = N(pros)-phospho-L-histidyl-[protein] + pyruvate. In terms of biological role, general (non sugar-specific) component of the phosphoenolpyruvate-dependent sugar phosphotransferase system (sugar PTS). This major carbohydrate active-transport system catalyzes the phosphorylation of incoming sugar substrates concomitantly with their translocation across the cell membrane. Enzyme I transfers the phosphoryl group from phosphoenolpyruvate (PEP) to the phosphoryl carrier protein (HPr). The chain is Phosphoenolpyruvate-protein phosphotransferase (ptsI) from Staphylococcus aureus (strain COL).